A 42-amino-acid polypeptide reads, in one-letter code: Delta-hexatoxin-Hv1a (42 aa).

4 disulfide bridges follow: cysteine 1–cysteine 15, cysteine 8–cysteine 20, cysteine 14–cysteine 31, and cysteine 16–cysteine 42.

Belongs to the neurotoxin 06 (delta-actx) family. Expressed by the venom gland.

Its subcellular location is the secreted. Inhibits tetrodotoxin-sensitive voltage-gated sodium channels (Nav) by binding to site 3. Slows the inactivation, and causes a prolongation of action potential duration resulting in repetitive firing in autonomic and motor nerve fibers. Does not depolarize the resting potential. Does not affect tetrodotoxin-resistant sodium channels. This lethal neurotoxin is active on both insect and mammalian voltage-gated sodium channels. Pan-neuronal expression in Drosophila is lethal but flies engineered to express the toxin only in pacemaker neurons have profound defects in circadian rhythm but a normal lifespan. The sequence is that of Delta-hexatoxin-Hv1a from Hadronyche versuta (Blue mountains funnel-web spider).